The chain runs to 311 residues: Aspartate carbamoyltransferase catalytic subunit (311 aa).

Carbamoyl phosphate is bound by residues R55 and T56. Residue K83 coordinates L-aspartate. R105, H134, and Q137 together coordinate carbamoyl phosphate. R167 and R226 together coordinate L-aspartate. Residues G267 and P268 each contribute to the carbamoyl phosphate site.

The protein belongs to the aspartate/ornithine carbamoyltransferase superfamily. ATCase family. Heterododecamer (2C3:3R2) of six catalytic PyrB chains organized as two trimers (C3), and six regulatory PyrI chains organized as three dimers (R2).

The catalysed reaction is carbamoyl phosphate + L-aspartate = N-carbamoyl-L-aspartate + phosphate + H(+). It functions in the pathway pyrimidine metabolism; UMP biosynthesis via de novo pathway; (S)-dihydroorotate from bicarbonate: step 2/3. Its function is as follows. Catalyzes the condensation of carbamoyl phosphate and aspartate to form carbamoyl aspartate and inorganic phosphate, the committed step in the de novo pyrimidine nucleotide biosynthesis pathway. The sequence is that of Aspartate carbamoyltransferase catalytic subunit from Corynebacterium jeikeium (strain K411).